Reading from the N-terminus, the 498-residue chain is Histidine--tRNA ligase (498 aa).

This sequence belongs to the class-II aminoacyl-tRNA synthetase family. Homodimer.

Its subcellular location is the cytoplasm. It catalyses the reaction tRNA(His) + L-histidine + ATP = L-histidyl-tRNA(His) + AMP + diphosphate + H(+). The protein is Histidine--tRNA ligase of Mycoplasmopsis synoviae (strain 53) (Mycoplasma synoviae).